Reading from the N-terminus, the 828-residue chain is BEN domain-containing protein 3 (828 aa).

A Glycyl lysine isopeptide (Lys-Gly) (interchain with G-Cter in SUMO); alternate cross-link involves residue lysine 20. Residue lysine 20 forms a Glycyl lysine isopeptide (Lys-Gly) (interchain with G-Cter in SUMO1); alternate linkage. Lysine 20 participates in a covalent cross-link: Glycyl lysine isopeptide (Lys-Gly) (interchain with G-Cter in SUMO2); alternate. Glycyl lysine isopeptide (Lys-Gly) (interchain with G-Cter in SUMO2) cross-links involve residues lysine 41, lysine 56, lysine 58, lysine 73, lysine 128, lysine 129, lysine 137, lysine 142, and lysine 158. A Nuclear localization signal motif is present at residues 56-58 (KRK). Serine 164 is modified (phosphoserine). A disordered region spans residues 164–184 (SPSSLRLLNEPQKRDCGSTGA). Lysine 176 is covalently cross-linked (Glycyl lysine isopeptide (Lys-Gly) (interchain with G-Cter in SUMO2)). A BEN 1 domain is found at 242-343 (PPPEYQLTAA…DFFSRFWAQR (102 aa)). Serine 379 bears the Phosphoserine mark. The 101-residue stretch at 387 to 487 (ASDHVVDTQD…DELEGLGLDA (101 aa)) folds into the BEN 2 domain. A Glycyl lysine isopeptide (Lys-Gly) (interchain with G-Cter in SUMO2) cross-link involves residue lysine 427. The interval 483-504 (LGLDAGSEGDPPRDDCYDSSSL) is disordered. Serine 489 carries the post-translational modification Phosphoserine. Lysine 512 is covalently cross-linked (Glycyl lysine isopeptide (Lys-Gly) (interchain with G-Cter in SUMO); alternate). A Glycyl lysine isopeptide (Lys-Gly) (interchain with G-Cter in SUMO2); alternate cross-link involves residue lysine 512. Lysine 528 participates in a covalent cross-link: Glycyl lysine isopeptide (Lys-Gly) (interchain with G-Cter in SUMO2). The 103-residue stretch at 548 to 650 (VPGADCLLSK…ERCRRRDTEQ (103 aa)) folds into the BEN 3 domain. A Glycyl lysine isopeptide (Lys-Gly) (interchain with G-Cter in SUMO2) cross-link involves residue lysine 700. Residues 715–816 (VPSPYLLSDK…ERCRRPNRKK (102 aa)) enclose the BEN 4 domain.

In terms of assembly, homooligomer, probably a homooctamer. Interacts with HDAC2 and HDAC3, but not HDAC1. Interacts with SALL4. Interacts with SMARCA5/SNF2H, BAZ2A/TIP5 and USP21. Interacts with the nucleosome remodeling and histone deacetylase (NuRD) repressor complex. Interacts (via BEN domains 1 and 3) with ERCC6L (via N-terminal TPR repeat); the interaction is direct. In terms of processing, sumoylated at Lys-20 by SUMO1 and at Lys-512 by SUMO1, SUMO2 and SUMO3. Sumoylation probably occurs sequentially, with that of Lys-20 preceding that of Lys-512. It does not alter association with heterochromatin, but is required for the repression of transcription. In terms of tissue distribution, expressed at least in heart, kidney, liver, ovary and spleen, with highest levels in spleen and lowest in heart. Expressed on the surface of T-cells.

It is found in the nucleus. Its subcellular location is the nucleolus. Its function is as follows. Transcriptional repressor which associates with the NoRC (nucleolar remodeling complex) complex and plays a key role in repressing rDNA transcription. The sumoylated form modulates the stability of the NoRC complex component BAZ2A/TIP5 by controlling its USP21-mediated deubiquitination. Binds to unmethylated major satellite DNA and is involved in the recruitment of the Polycomb repressive complex 2 (PRC2) to major satellites. Stimulates the ERCC6L translocase and ATPase activities. This is BEN domain-containing protein 3 (BEND3) from Homo sapiens (Human).